The chain runs to 62 residues: Potassium channel toxin alpha-KTx 10.1 (62 aa).

A signal peptide spans 1 to 22 (MEGIAKITLILLFLFVTMHTFA). Residues 23 to 28 (NWNTEA) constitute a propeptide that is removed on maturation. 3 cysteine pairs are disulfide-bonded: C31–C50, C36–C55, and C40–C57. Tyrosine amide is present on Y60.

Belongs to the short scorpion toxin superfamily. Potassium channel inhibitor family. Alpha-KTx 10 subfamily. In terms of tissue distribution, expressed by the venom gland.

The protein resides in the secreted. Blocks Shaker B (Sh) and voltage-gated potassium-channels Kv1.1/KCNA1, Kv1.2/KCNA2, Kv1.3/KCNA3. Also inhibits small conductance calcium-activated potassium channels (KCNN) and intermediate conductance calcium-activated potassium channel (KCa3.1/KCNN4). The protein is Potassium channel toxin alpha-KTx 10.1 of Centruroides noxius (Mexican scorpion).